The following is a 329-amino-acid chain: Phenylalanine--tRNA ligase alpha subunit (329 aa).

E254 provides a ligand contact to Mg(2+).

Belongs to the class-II aminoacyl-tRNA synthetase family. Phe-tRNA synthetase alpha subunit type 1 subfamily. In terms of assembly, tetramer of two alpha and two beta subunits. Requires Mg(2+) as cofactor.

The protein localises to the cytoplasm. The catalysed reaction is tRNA(Phe) + L-phenylalanine + ATP = L-phenylalanyl-tRNA(Phe) + AMP + diphosphate + H(+). This Haemophilus influenzae (strain PittEE) protein is Phenylalanine--tRNA ligase alpha subunit.